The sequence spans 564 residues: Sulfite reductase [NADPH] hemoprotein beta-component 2 (564 aa).

Residues Cys426, Cys432, Cys471, and Cys475 each contribute to the [4Fe-4S] cluster site. Cys475 is a siroheme binding site.

The protein belongs to the nitrite and sulfite reductase 4Fe-4S domain family. In terms of assembly, alpha(8)-beta(8). The alpha component is a flavoprotein, the beta component is a hemoprotein. Siroheme is required as a cofactor. It depends on [4Fe-4S] cluster as a cofactor.

It carries out the reaction hydrogen sulfide + 3 NADP(+) + 3 H2O = sulfite + 3 NADPH + 4 H(+). The protein operates within sulfur metabolism; hydrogen sulfide biosynthesis; hydrogen sulfide from sulfite (NADPH route): step 1/1. Functionally, component of the sulfite reductase complex that catalyzes the 6-electron reduction of sulfite to sulfide. This is one of several activities required for the biosynthesis of L-cysteine from sulfate. The sequence is that of Sulfite reductase [NADPH] hemoprotein beta-component 2 from Klebsiella pneumoniae (strain 342).